A 296-amino-acid polypeptide reads, in one-letter code: Phosphatidylglycerol--prolipoprotein diacylglyceryl transferase (296 aa).

Transmembrane regions (helical) follow at residues 17–37 (LAVRWYGLMYLVGFIFAIVVG), 59–79 (MMFYGVLGVVLGGRLGYVLFY), and 97–117 (GGMSFHGGFLGVTLAMALFAW). R142 is an a 1,2-diacyl-sn-glycero-3-phospho-(1'-sn-glycerol) binding site. Helical transmembrane passes span 230 to 250 (MGAISALFLIGYGAARFTVEF) and 265 to 285 (LSMGQWLSLPMIVAGVLMMIW).

Belongs to the Lgt family.

It is found in the cell inner membrane. It catalyses the reaction L-cysteinyl-[prolipoprotein] + a 1,2-diacyl-sn-glycero-3-phospho-(1'-sn-glycerol) = an S-1,2-diacyl-sn-glyceryl-L-cysteinyl-[prolipoprotein] + sn-glycerol 1-phosphate + H(+). The protein operates within protein modification; lipoprotein biosynthesis (diacylglyceryl transfer). Functionally, catalyzes the transfer of the diacylglyceryl group from phosphatidylglycerol to the sulfhydryl group of the N-terminal cysteine of a prolipoprotein, the first step in the formation of mature lipoproteins. This Burkholderia pseudomallei (strain 668) protein is Phosphatidylglycerol--prolipoprotein diacylglyceryl transferase.